The primary structure comprises 109 residues: Nucleoid-associated protein LBUL_1514 (109 aa).

This sequence belongs to the YbaB/EbfC family. As to quaternary structure, homodimer.

It is found in the cytoplasm. Its subcellular location is the nucleoid. Functionally, binds to DNA and alters its conformation. May be involved in regulation of gene expression, nucleoid organization and DNA protection. The protein is Nucleoid-associated protein LBUL_1514 of Lactobacillus delbrueckii subsp. bulgaricus (strain ATCC BAA-365 / Lb-18).